The following is a 254-amino-acid chain: Phosphatidylglycerol--prolipoprotein diacylglyceryl transferase (254 aa).

Transmembrane regions (helical) follow at residues 11–31, 49–69, 84–104, and 109–129; these read LAIR…LLLA, FLIA…IFEF, QGGL…YIYL, and ESFF…QAIG. Arg130 provides a ligand contact to a 1,2-diacyl-sn-glycero-3-phospho-(1'-sn-glycerol). The next 3 membrane-spanning stretches (helical) occupy residues 169 to 189, 196 to 216, and 228 to 248; these read PTFL…VYLL, GIVF…IEGL, and VAQL…YNII.

The protein belongs to the Lgt family.

The protein resides in the cell membrane. The enzyme catalyses L-cysteinyl-[prolipoprotein] + a 1,2-diacyl-sn-glycero-3-phospho-(1'-sn-glycerol) = an S-1,2-diacyl-sn-glyceryl-L-cysteinyl-[prolipoprotein] + sn-glycerol 1-phosphate + H(+). It functions in the pathway protein modification; lipoprotein biosynthesis (diacylglyceryl transfer). Catalyzes the transfer of the diacylglyceryl group from phosphatidylglycerol to the sulfhydryl group of the N-terminal cysteine of a prolipoprotein, the first step in the formation of mature lipoproteins. The protein is Phosphatidylglycerol--prolipoprotein diacylglyceryl transferase of Clostridium botulinum (strain Langeland / NCTC 10281 / Type F).